We begin with the raw amino-acid sequence, 76 residues long: Acyl carrier protein (76 aa).

The region spanning 1 to 76 (MSVEEKISKI…DAIAYIKNKQ (76 aa)) is the Carrier domain. Ser36 is modified (O-(pantetheine 4'-phosphoryl)serine).

This sequence belongs to the acyl carrier protein (ACP) family. 4'-phosphopantetheine is transferred from CoA to a specific serine of apo-ACP by AcpS. This modification is essential for activity because fatty acids are bound in thioester linkage to the sulfhydryl of the prosthetic group.

It localises to the cytoplasm. Its pathway is lipid metabolism; fatty acid biosynthesis. Functionally, carrier of the growing fatty acid chain in fatty acid biosynthesis. The chain is Acyl carrier protein from Nitratidesulfovibrio vulgaris (strain DSM 19637 / Miyazaki F) (Desulfovibrio vulgaris).